A 253-amino-acid polypeptide reads, in one-letter code: Ribonuclease HII (253 aa).

The RNase H type-2 domain maps to 32 to 223; sequence APVAGLDEAG…FKTSGEEDRI (192 aa). A divalent metal cation contacts are provided by D38, E39, and D130.

The protein belongs to the RNase HII family. It depends on Mn(2+) as a cofactor. Mg(2+) is required as a cofactor.

The protein localises to the cytoplasm. It carries out the reaction Endonucleolytic cleavage to 5'-phosphomonoester.. Functionally, endonuclease that specifically degrades the RNA of RNA-DNA hybrids. This Chelativorans sp. (strain BNC1) protein is Ribonuclease HII.